A 753-amino-acid polypeptide reads, in one-letter code: Replication restart protein PriA (753 aa).

Positions 228–395 (SLITTKFQTC…LSKKYTLSVL (168 aa)) constitute a Helicase ATP-binding domain. An ATP-binding site is contributed by 241-248 (GVTGSGKT). Residues 337 to 340 (DEEH) carry the DEAH box motif. Zn(2+) contacts are provided by Cys-458, Cys-461, Cys-467, Cys-470, Cys-485, Cys-488, Cys-499, and Cys-502. Positions 491–646 (RLSKPITSCP…DFPAFYKEEI (156 aa)) constitute a Helicase C-terminal domain.

This sequence belongs to the helicase family. PriA subfamily. Component of the replication restart primosome. Requires Zn(2+) as cofactor.

It catalyses the reaction Couples ATP hydrolysis with the unwinding of duplex DNA by translocating in the 3'-5' direction.. The catalysed reaction is ATP + H2O = ADP + phosphate + H(+). Its function is as follows. Initiates the restart of stalled replication forks, which reloads the replicative helicase on sites other than the origin of replication. Recognizes and binds to abandoned replication forks and remodels them to uncover a helicase loading site. Promotes assembly of the primosome at these replication forks. The sequence is that of Replication restart protein PriA from Chlamydia muridarum (strain MoPn / Nigg).